A 1159-amino-acid polypeptide reads, in one-letter code: CRISPR-associated endoribonuclease Cas13a (1159 aa).

The tract at residues 1 to 11 is binds crRNA repeat and spacer; the sequence is MKVTKVGGISH. Positions 1-170 are NTD; sequence MKVTKVGGIS…NNIEKVEGKS (170 aa). Binds crRNA repeat regions lie at residues 139 to 151, 172 to 176, 224 to 233, 271 to 276, 294 to 297, and 301 to 305; these read NKINSLKYSFEKN, RNIIY, REFYHEIIGR, QVFYKY, HFVE, and SQLLK. The segment at 171-360 is helical-1; that stretch reads KRNIIYDYYR…YNYYLQDGEI (190 aa). The binds crRNA processing site stretch occupies residues 319–328; that stretch reads KIKRIFEYQN. 2 binds crRNA repeat regions span residues 336–340 and 371–378; these read KLLNK and QNEAFLRN. The HEPN-like fold 1-I stretch occupies residues 361–508; it reads ATSDFIARNR…SKKMFQNEIN (148 aa). Active-site for target RNA cleavage residues include R472 and H477. A helical-2 region spans residues 509–751; sequence EKKLKLKIFR…EFLREIKLGN (243 aa). The binds target RNA stretch occupies residues 519–522; the sequence is QLNS. Positions 547–558 are binds crRNA spacer; sequence NKNIPFVPSFTK. The interval 590 to 597 is binds target RNA; it reads DAQIYLLK. The tract at residues 718–722 is binds crRNA spacer; it reads KQEFD. Residues 752–813 form an HEPN-like fold 1-II region; the sequence is ILKYTERLNM…NLDNNRVTED (62 aa). The interval 780–783 is binds crRNA repeat; the sequence is SLEK. A binds crRNA spacer and target RNA region spans residues 804–810; that stretch reads NLDNNRV. Residues 814–946 form a linker region; that stretch reads FELEADEIGK…EYTHLKNKVE (133 aa). Binds crRNA spacer stretches follow at residues 845–857 and 938–942; these read KIYFDGENIIKHR and YTHLK. Residues 880–946 are a coiled coil; that stretch reads YKISIEELKK…EYTHLKNKVE (67 aa). Residues 947–1159 form an HEPN-like fold 2 region; that stretch reads FNELNLLQGL…YKMEEKKSEN (213 aa). The segment at 962 to 963 is binds crRNA repeat; the sequence is HR. The tract at residues 995 to 998 is binds 3'-end of target RNA, in adjacent protein; the sequence is FENK. Catalysis depends on for target RNA cleavage residues R1048 and H1053. 2 binds crRNA processing site regions span residues 1072-1082 and 1104-1108; these read RKLLSYDRKLK and IGADK.

It belongs to the CRISPR-associated endoribonuclease Cas13a family. Crystals show the 3'-end of target RNA interacting with an adjacent protein molecule, and mutagenesis of those amino acid residues decreases target RNA cleavage, but it is not clear if this is physiological. A divalent metal cation serves as cofactor.

Target RNA acts as an activator for non-specific ssRNA cleavage; the target RNA and complementary crRNA must both be at least 20 nucleotides long to activate the HEPN-like catalytic pocket for RNase activity. In terms of biological role, CRISPR (clustered regularly interspaced short palindromic repeat), is an adaptive immune system that provides protection against mobile genetic elements (viruses, transposable elements and conjugative plasmids). CRISPR clusters contain sequences complementary to antecedent mobile elements (spacer sequences) and target invading nucleic acids. Unlike many single-component effectors, this CRISPR-Cas system targets RNA. CRISPR clusters are transcribed from pre-CRISPR RNA (crRNA) and processed into crRNA by this protein. pre-crRNA processing yields a 5'-OH and probably a 2',3'-cyclic phosphate. Also cleaves pre-crRNA from several other type VI-A CRISPR systems. Cleaves linear target ssRNA in a crRNA-dependent fashion, preferentially before U residues. Cleavage of target ssRNA is about 80-fold faster than pre-crRNA processing and uses a different active site. Binding a viable target RNA target activates this protein for non-specific RNA degradation in vitro (called collateral RNA degradation). Activation occurs with 10 fM target RNA. crRNA maturation is not essential for activation of RNA degradation, but lack of mature crRNA (due to mutagenesis) decreases activation levels. This system has a 3' protospacer flanking site in the target RNA (PFS), which is C and unavailable to base pair with crRNA (PFS is equivalent to PAM, the protospacer adjacent motif). The polypeptide is CRISPR-associated endoribonuclease Cas13a (Leptotrichia buccalis (strain ATCC 14201 / DSM 1135 / JCM 12969 / NCTC 10249 / C-1013-b)).